The primary structure comprises 325 residues: Pyruvate dehydrogenase E1 component subunit beta (325 aa).

Glu60 is a binding site for thiamine diphosphate.

Heterodimer of an alpha and a beta chain. Thiamine diphosphate is required as a cofactor.

It carries out the reaction N(6)-[(R)-lipoyl]-L-lysyl-[protein] + pyruvate + H(+) = N(6)-[(R)-S(8)-acetyldihydrolipoyl]-L-lysyl-[protein] + CO2. Functionally, the pyruvate dehydrogenase complex catalyzes the overall conversion of pyruvate to acetyl-CoA and CO(2). It contains multiple copies of three enzymatic components: pyruvate dehydrogenase (E1), dihydrolipoamide acetyltransferase (E2) and lipoamide dehydrogenase (E3). The polypeptide is Pyruvate dehydrogenase E1 component subunit beta (pdhB) (Geobacillus stearothermophilus (Bacillus stearothermophilus)).